The primary structure comprises 278 residues: Bifunctional protein FolD (278 aa).

NADP(+) is bound by residues 163–165 (GRS), serine 188, and valine 229.

The protein belongs to the tetrahydrofolate dehydrogenase/cyclohydrolase family. Homodimer.

It carries out the reaction (6R)-5,10-methylene-5,6,7,8-tetrahydrofolate + NADP(+) = (6R)-5,10-methenyltetrahydrofolate + NADPH. The catalysed reaction is (6R)-5,10-methenyltetrahydrofolate + H2O = (6R)-10-formyltetrahydrofolate + H(+). The protein operates within one-carbon metabolism; tetrahydrofolate interconversion. Its function is as follows. Catalyzes the oxidation of 5,10-methylenetetrahydrofolate to 5,10-methenyltetrahydrofolate and then the hydrolysis of 5,10-methenyltetrahydrofolate to 10-formyltetrahydrofolate. This chain is Bifunctional protein FolD, found in Exiguobacterium sp. (strain ATCC BAA-1283 / AT1b).